Reading from the N-terminus, the 356-residue chain is Adenine deaminase (356 aa).

Residues His-23, His-25, and His-211 each contribute to the Zn(2+) site. The Proton donor role is filled by Glu-214. Asp-292 provides a ligand contact to Zn(2+). A substrate-binding site is contributed by Asp-293.

The protein belongs to the metallo-dependent hydrolases superfamily. Adenosine and AMP deaminases family. Adenine deaminase type 2 subfamily. Zn(2+) is required as a cofactor.

The protein resides in the cytoplasm. It is found in the nucleus. The enzyme catalyses adenine + H2O + H(+) = hypoxanthine + NH4(+). In terms of biological role, catalyzes the hydrolytic deamination of adenine to hypoxanthine. Plays an important role in the purine salvage pathway and in nitrogen catabolism. In Candida albicans (strain SC5314 / ATCC MYA-2876) (Yeast), this protein is Adenine deaminase.